A 287-amino-acid polypeptide reads, in one-letter code: Small ribosomal subunit biogenesis GTPase RsgA (287 aa).

The CP-type G domain occupies 61–218 (SSELIRPTVA…LVDTPGFTTL (158 aa)). GTP contacts are provided by residues 110-113 (NKED) and 161-169 (GPSGAGKST). Positions 242, 247, 249, and 255 each coordinate Zn(2+).

The protein belongs to the TRAFAC class YlqF/YawG GTPase family. RsgA subfamily. As to quaternary structure, monomer. Associates with 30S ribosomal subunit, binds 16S rRNA. The cofactor is Zn(2+).

The protein localises to the cytoplasm. Its function is as follows. One of several proteins that assist in the late maturation steps of the functional core of the 30S ribosomal subunit. Helps release RbfA from mature subunits. May play a role in the assembly of ribosomal proteins into the subunit. Circularly permuted GTPase that catalyzes slow GTP hydrolysis, GTPase activity is stimulated by the 30S ribosomal subunit. This is Small ribosomal subunit biogenesis GTPase RsgA from Clostridium perfringens (strain 13 / Type A).